Consider the following 1826-residue polypeptide: ATPase family AAA domain-containing protein 5 (1826 aa).

Phosphoserine is present on S44. Residue K127 forms a Glycyl lysine isopeptide (Lys-Gly) (interchain with G-Cter in SUMO2) linkage. 7 disordered regions span residues 170–254, 282–311, 323–367, 398–572, 588–623, 647–684, and 709–729; these read SIED…KRAD, PAVP…CEPS, AQVH…RKSN, QQFM…EPGS, RSCS…ARTS, KFTR…TSKN, and VVPL…KSPE. S215 bears the Phosphoserine mark. Residues 243-254 show a composition bias toward basic and acidic residues; sequence NDSRTHATKRAD. The segment covering 298–311 has biased composition (low complexity); sequence SGSEGELSGSCEPS. Residues S351 and S366 each carry the phosphoserine modification. The interval 365–381 is interaction with WDR48; that stretch reads KSNVVIQEGQLELAVLE. Residues 418 to 442 are compositionally biased toward basic and acidic residues; it reads KPLEKQKDPSEKSVHEGDSSSEKII. Polar residues predominate over residues 445–456; the sequence is PNIQRVSSQGCL. Residues 459-468 are compositionally biased toward basic and acidic residues; the sequence is HADRGSFPKE. Over residues 469–481 the composition is skewed to basic residues; it reads KSKKPNKKGKKTR. A compositionally biased stretch (basic and acidic residues) spans 487–505; that stretch reads NREENIQKEKTAFSLKDEQ. Positions 540–559 are enriched in polar residues; it reads DSVQMSLCNRNKSRSSSTPT. A phosphoserine mark is found at S591 and S603. A phosphoserine mark is found at S727 and S801. The segment at 965-1034 is disordered; sequence GKQASPQLQP…NLDPSRDSGT (70 aa). A compositionally biased stretch (basic and acidic residues) spans 1006 to 1019; the sequence is EEMKGRSKDLDERI. S1104 is modified (phosphoserine). 1119–1126 serves as a coordination point for ATP; it reads GPTGVGKT. A disordered region spans residues 1183–1216; sequence YNIGKSPKKLNSPGKVVTSPRKLPPSSPKTSGQK. Positions 1415-1419 match the LXCXE motif motif; sequence LVCSE. 2 disordered regions span residues 1527 to 1552 and 1592 to 1611; these read PASM…RKQK and SNPE…VPQP. Residues 1612-1701 are interaction with RAD51 and RFC5; sequence PKTLAEKKCC…ATAEALSFTE (90 aa).

The protein belongs to the AAA ATPase family. In terms of assembly, component of a heteropentameric replication factor ATAD5 RFC-like complex composed of one large subunit (ATAD5) and four small subunits (RFC2, RFC3, RFC4 and RFC5). Within the ATAD5 RFC-like complex, interacts with RFC2, RFC4 and RFC5. Within the ATAD5 RFC-like complex, interacts directly via-N terminal with RAD51; the interactions is enhanced under replication stress. Interacts with RB1 predominantly in G1 phase via its LXCXE motif. Interacts with RAD9A in growing cells. The interaction with RAD9A is reduced after exposure to DNA replication-inhibiting agents. Interacts with BRD4. Interacts with PCNA. Interacts with deubiquitinating enzyme USP1, and its associated factor, WDR48. ATR may stimulate the RAD9A dissociation. In terms of tissue distribution, expressed ubiquitously in all cell lines like teratocarcinoma, cell lymphoma, lymphoma.

It is found in the nucleus. In terms of biological role, has an important role in DNA replication and in maintaining genome integrity during replication stress. Involved in a RAD9A-related damage checkpoint, a pathway that is important in determining whether DNA damage is compatible with cell survival or whether it requires cell elimination by apoptosis. Modulates the RAD9A interaction with BCL2 and thereby induces DNA damage-induced apoptosis. Promotes PCNA deubiquitination by recruiting the ubiquitin-specific protease 1 (USP1) and WDR48 thereby down-regulating the error-prone damage bypass pathway. As component of the ATAD5 RFC-like complex, regulates the function of the DNA polymerase processivity factor PCNA by unloading the ring-shaped PCNA homotrimer from DNA after replication during the S phase of the cell cycle. This seems to be dependent on its ATPase activity. Plays important roles in restarting stalled replication forks under replication stress, by unloading the PCNA homotrimer from DNA and recruiting RAD51 possibly through an ATR-dependent manner. Ultimately this enables replication fork regression, breakage, and eventual fork restart. Both the PCNA unloading activity and the interaction with WDR48 are required to efficiently recruit RAD51 to stalled replication forks. Promotes the generation of MUS81-mediated single-stranded DNA-associated breaks in response to replication stress, which is an alternative pathway to restart stalled/regressed replication forks. The polypeptide is ATPase family AAA domain-containing protein 5 (Atad5) (Mus musculus (Mouse)).